Consider the following 193-residue polypeptide: Small COPII coat GTPase SAR1 (193 aa).

The STAR; SAR1-N-terminal activation recruitment. Required for the activation and subsequent recruitment to ER membrane motif lies at 3–5; the sequence is FLW. Positions 11-15 are mediates recruitment to ER membranes; it reads VLNML. A Mg(2+)-binding site is contributed by D30. GDP contacts are provided by N31, A32, G33, K34, T35, and T36. Position 31 (N31) interacts with GTP. Residues G33, K34, T35, and T36 each coordinate GTP. D71 is a Mg(2+) binding site. The GDP site is built by N130, K131, D133, V176, and L177. The GTP site is built by N130, K131, D133, V176, and L177.

The protein belongs to the small GTPase superfamily. SAR1 family. In terms of assembly, homodimer; upon association with membrane. Part of the coat protein complex II/COPII, composed of SEC23/24 and SEC13/31 heterodimers, that it helps recruit and assemble on endoplasmic reticulum (ER) membranes at ER exit sites.

It localises to the endoplasmic reticulum membrane. The protein resides in the golgi apparatus. Its subcellular location is the golgi stack membrane. It is found in the cytoplasm. The protein localises to the cytosol. The enzyme catalyses GTP + H2O = GDP + phosphate + H(+). With respect to regulation, small GTPases activation is mediated by guanine exchange factors (GEF), while inactivation through hydrolysis of the bound GTP is stimulated by GTPase activating proteins (GAP). In terms of biological role, small GTPase that cycles between an active GTP-bound and an inactive GDP-bound state and mainly functions in vesicle-mediated endoplasmic reticulum (ER) to Golgi transport. The active GTP-bound form inserts into the endoplasmic reticulum membrane where it recruits the remainder of the coat protein complex II/COPII. The coat protein complex II assembling and polymerizing on endoplasmic reticulum membrane is responsible for both the sorting of cargos and the deformation and budding of membranes into vesicles destined to the Golgi. Plays a role in transporting the tyrosine kinase receptor let-23 from the endoplasmic reticulum to the plasma membrane of vulval precursor cells. This Caenorhabditis elegans protein is Small COPII coat GTPase SAR1.